The primary structure comprises 946 residues: Zinc finger protein rotund (946 aa).

Disordered stretches follow at residues 10 to 30 and 156 to 269; these read GPQL…GHSD and FRKP…HNLN. Polar residues predominate over residues 161-176; the sequence is NNNGYSWSTGNNNEVV. Positions 177–188 are enriched in low complexity; it reads SHSSNGHTNNHP. Composition is skewed to polar residues over residues 198–230 and 242–269; these read ASAT…SIKS and TCKS…HNLN. 6 C2H2-type zinc fingers span residues 488–510, 517–539, 545–567, 573–597, 603–625, and 634–656; these read YQCK…TQIH, YKCT…TRIH, YRCE…IRTH, YKCR…SRCH, FKCN…IPKH, and HICQ…MQKH. The disordered stretch occupies residues 683-853; sequence GGSANPANGP…TPSAVGPYDA (171 aa). Low complexity-rich tracts occupy residues 739–762 and 770–790; these read HQQQ…QQQQ and HGVP…QQQQ. Polar residues predominate over residues 813 to 822; sequence TAPNGSQSNG. Over residues 828–841 the composition is skewed to basic and acidic residues; that stretch reads QPHHRMPDPVREDI.

This sequence belongs to the krueppel C2H2-type zinc-finger protein family. In terms of assembly, interacts with nab; which acts as a corepressor. Isoform rn and isoform roe are expressed in non-overlapping domains in the larval imaginal disks. Isoform rn is first expressed during the early third larval instar in the leg, wing, haltere and antennal part of the eye-antennal imaginal disk. It is observed as a ring in the leg and antenna disks and in the presumptive wing pouch and capitellum of wing and haltere disks respectively. In wing disk it is expressed in 3 concentric domains in the wing pouch. In late third instar, expression of isoform rn in the leg disk is no longer evident, but is maintained in the other disks. Isoform roe appears in the third instar and is confined to the eye part of the eye-antennal imaginal disk in a band of 4-6 cells at the morphogenetic furrow. There is no evidence of roe expression in other imaginal disks.

Its subcellular location is the nucleus. Its function is as follows. Transcription factor involved in imaginal disks development. Isoform rn is required in the wings, antenna, haltere, proboscis and legs disks, while isoform roe is required in the eye disk. Together with nab corepressor, it is involved in the initiation and maintenance of wingless (wg) expression in the wing hinge, by limiting the expression of wg to this compartment. Also required for the epithelial-mesenchymal transition branch of basolateral junctions signaling. This chain is Zinc finger protein rotund, found in Drosophila melanogaster (Fruit fly).